Consider the following 852-residue polypeptide: Envelope glycoprotein gp160 (852 aa).

The N-terminal stretch at Met-1–Asp-32 is a signal peptide. The Extracellular portion of the chain corresponds to Lys-33–Ile-680. Asn-49 is a glycosylation site (N-linked (GlcNAc...) asparagine; by host). A disulfide bridge links Cys-54 with Cys-74. N-linked (GlcNAc...) asparagine; by host glycosylation is found at Asn-88, Asn-135, Asn-138, Asn-154, Asn-158, Asn-197, Asn-234, Asn-241, Asn-262, Asn-276, Asn-289, Asn-295, Asn-301, Asn-331, Asn-354, and Asn-360. 5 disulfides stabilise this stretch: Cys-119/Cys-205, Cys-126/Cys-196, Cys-131/Cys-155, Cys-218/Cys-247, and Cys-228/Cys-239. Residues Cys-131 to Asn-154 form a V1 region. The V2 stretch occupies residues Cys-155–Cys-196. Residues Cys-296–His-329 form a V3 region. Cys-296 and Cys-330 are oxidised to a cystine. The segment at Ser-362–His-372 is CD4-binding loop. Cystine bridges form between Cys-376/Cys-439 and Cys-383/Cys-412. The interval Cys-383–Cys-412 is V4. N-linked (GlcNAc...) asparagine; by host glycans are attached at residues Asn-384, Asn-390, Asn-396, Asn-400, Asn-442, and Asn-456. 2 V5 regions span residues Asn-454–Gly-467 and Glu-457–Gly-467. Positions Ala-508–Ala-528 are fusion peptide. The interval Lys-570–Leu-588 is immunosuppression. Cys-594 and Cys-600 are oxidised to a cystine. 5 N-linked (GlcNAc...) asparagine; by host glycosylation sites follow: Asn-607, Asn-612, Asn-621, Asn-633, and Asn-670. Residues Arg-629 to Ala-663 are a coiled coil. Residues Glu-658–Lys-679 are MPER; binding to GalCer. Residues Phe-681 to Val-701 traverse the membrane as a helical segment. Residues Asn-702–Gln-852 lie on the Cytoplasmic side of the membrane. The short motif at Tyr-708–Leu-711 is the YXXL motif; contains endocytosis signal element. Residues Thr-715 to Ser-741 are disordered.

Belongs to the HIV-1 env protein family. As to quaternary structure, the mature envelope protein (Env) consists of a homotrimer of non-covalently associated gp120-gp41 heterodimers. The resulting complex protrudes from the virus surface as a spike. There seems to be as few as 10 spikes on the average virion. Interacts with host CD4, CCR5 and CXCR4. Gp120 also interacts with the C-type lectins CD209/DC-SIGN and CLEC4M/DC-SIGNR (collectively referred to as DC-SIGN(R)). Gp120 and gp41 interact with GalCer. Gp120 interacts with host ITGA4/ITGB7 complex; on CD4+ T-cells, this interaction results in rapid activation of integrin ITGAL/LFA-1, which facilitates efficient cell-to-cell spreading of HIV-1. Gp120 interacts with cell-associated heparan sulfate; this interaction increases virus infectivity on permissive cells and may be involved in infection of CD4- cells. In terms of assembly, the mature envelope protein (Env) consists of a homotrimer of non-covalently associated gp120-gp41 heterodimers. The resulting complex protrudes from the virus surface as a spike. There seems to be as few as 10 spikes on the average virion. In terms of processing, highly glycosylated by host. The high number of glycan on the protein is reffered to as 'glycan shield' because it contributes to hide protein sequence from adaptive immune system. Post-translationally, palmitoylation of the transmembrane protein and of Env polyprotein (prior to its proteolytic cleavage) is essential for their association with host cell membrane lipid rafts. Palmitoylation is therefore required for envelope trafficking to classical lipid rafts, but not for viral replication. Specific enzymatic cleavages in vivo yield mature proteins. Envelope glycoproteins are synthesized as an inactive precursor that is heavily N-glycosylated and processed likely by host cell furin in the Golgi to yield the mature SU and TM proteins. The cleavage site between SU and TM requires the minimal sequence [KR]-X-[KR]-R. About 2 of the 9 disulfide bonds of gp41 are reduced by P4HB/PDI, following binding to CD4 receptor.

The protein resides in the virion membrane. The protein localises to the host cell membrane. It localises to the host endosome membrane. In terms of biological role, oligomerizes in the host endoplasmic reticulum into predominantly trimers. In a second time, gp160 transits in the host Golgi, where glycosylation is completed. The precursor is then proteolytically cleaved in the trans-Golgi and thereby activated by cellular furin or furin-like proteases to produce gp120 and gp41. Functionally, attaches the virus to the host lymphoid cell by binding to the primary receptor CD4. This interaction induces a structural rearrangement creating a high affinity binding site for a chemokine coreceptor like CXCR4 and/or CCR5. Acts as a ligand for CD209/DC-SIGN and CLEC4M/DC-SIGNR, which are respectively found on dendritic cells (DCs), and on endothelial cells of liver sinusoids and lymph node sinuses. These interactions allow capture of viral particles at mucosal surfaces by these cells and subsequent transmission to permissive cells. HIV subverts the migration properties of dendritic cells to gain access to CD4+ T-cells in lymph nodes. Virus transmission to permissive T-cells occurs either in trans (without DCs infection, through viral capture and transmission), or in cis (following DCs productive infection, through the usual CD4-gp120 interaction), thereby inducing a robust infection. In trans infection, bound virions remain infectious over days and it is proposed that they are not degraded, but protected in non-lysosomal acidic organelles within the DCs close to the cell membrane thus contributing to the viral infectious potential during DCs' migration from the periphery to the lymphoid tissues. On arrival at lymphoid tissues, intact virions recycle back to DCs' cell surface allowing virus transmission to CD4+ T-cells. Its function is as follows. Acts as a class I viral fusion protein. Under the current model, the protein has at least 3 conformational states: pre-fusion native state, pre-hairpin intermediate state, and post-fusion hairpin state. During fusion of viral and target intracellular membranes, the coiled coil regions (heptad repeats) assume a trimer-of-hairpins structure, positioning the fusion peptide in close proximity to the C-terminal region of the ectodomain. The formation of this structure appears to drive apposition and subsequent fusion of viral and target cell membranes. Complete fusion occurs in host cell endosomes and is dynamin-dependent, however some lipid transfer might occur at the plasma membrane. The virus undergoes clathrin-dependent internalization long before endosomal fusion, thus minimizing the surface exposure of conserved viral epitopes during fusion and reducing the efficacy of inhibitors targeting these epitopes. Membranes fusion leads to delivery of the nucleocapsid into the cytoplasm. In Human immunodeficiency virus type 1 group M subtype B (isolate BRVA) (HIV-1), this protein is Envelope glycoprotein gp160.